A 348-amino-acid chain; its full sequence is Ferredoxin--NADP reductase 1 (348 aa).

Glu36, Lys44, Tyr48, Ile88, Pro123, Asp285, and Ser326 together coordinate FAD. The interval 329–348 is disordered; that stretch reads EKFKKKNEQLKQEKQAQLMN.

The protein belongs to the ferredoxin--NADP reductase type 2 family. As to quaternary structure, homodimer. FAD is required as a cofactor.

The enzyme catalyses 2 reduced [2Fe-2S]-[ferredoxin] + NADP(+) + H(+) = 2 oxidized [2Fe-2S]-[ferredoxin] + NADPH. In Shouchella clausii (strain KSM-K16) (Alkalihalobacillus clausii), this protein is Ferredoxin--NADP reductase 1.